A 226-amino-acid polypeptide reads, in one-letter code: 3-dehydroquinate dehydratase (226 aa).

3-dehydroquinate contacts are provided by residues serine 21, 42 to 44 (EVR), and arginine 70. The Proton donor/acceptor role is filled by histidine 124. Catalysis depends on lysine 149, which acts as the Schiff-base intermediate with substrate. Arginine 187, threonine 206, and glutamine 210 together coordinate 3-dehydroquinate.

The protein belongs to the type-I 3-dehydroquinase family. In terms of assembly, homodimer.

It catalyses the reaction 3-dehydroquinate = 3-dehydroshikimate + H2O. It participates in metabolic intermediate biosynthesis; chorismate biosynthesis; chorismate from D-erythrose 4-phosphate and phosphoenolpyruvate: step 3/7. Its function is as follows. Involved in the third step of the chorismate pathway, which leads to the biosynthesis of aromatic amino acids. Catalyzes the cis-dehydration of 3-dehydroquinate (DHQ) and introduces the first double bond of the aromatic ring to yield 3-dehydroshikimate. The polypeptide is 3-dehydroquinate dehydratase (Methanothrix thermoacetophila (strain DSM 6194 / JCM 14653 / NBRC 101360 / PT) (Methanosaeta thermophila)).